Reading from the N-terminus, the 557-residue chain is Formate--tetrahydrofolate ligase (557 aa).

ATP is bound at residue 66-73; sequence TPAGEGKS.

It belongs to the formate--tetrahydrofolate ligase family.

It catalyses the reaction (6S)-5,6,7,8-tetrahydrofolate + formate + ATP = (6R)-10-formyltetrahydrofolate + ADP + phosphate. It participates in one-carbon metabolism; tetrahydrofolate interconversion. The chain is Formate--tetrahydrofolate ligase from Clostridium botulinum (strain 657 / Type Ba4).